The primary structure comprises 764 residues: Protein Lines homolog 1 (764 aa).

Disordered regions lie at residues 615–668 and 682–702; these read SQSQ…TSLC and WEEQKEHSLEPLLSAESSSPF. A compositionally biased stretch (acidic residues) spans 645 to 654; sequence DSSEASEEET. The residue at position 650 (Ser650) is a Phosphoserine. Residues 658–668 are compositionally biased toward polar residues; that stretch reads HLANSKQTSLC. Over residues 691–702 the composition is skewed to low complexity; the sequence is EPLLSAESSSPF.

This sequence belongs to the protein lines family.

This Mus musculus (Mouse) protein is Protein Lines homolog 1.